We begin with the raw amino-acid sequence, 72 residues long: Translation initiation factor IF-1 (72 aa).

Residues 1-72 (MAREDLIEVE…SRGRITYRKK (72 aa)) enclose the S1-like domain.

The protein belongs to the IF-1 family. In terms of assembly, component of the 30S ribosomal translation pre-initiation complex which assembles on the 30S ribosome in the order IF-2 and IF-3, IF-1 and N-formylmethionyl-tRNA(fMet); mRNA recruitment can occur at any time during PIC assembly.

It is found in the cytoplasm. Its function is as follows. One of the essential components for the initiation of protein synthesis. Stabilizes the binding of IF-2 and IF-3 on the 30S subunit to which N-formylmethionyl-tRNA(fMet) subsequently binds. Helps modulate mRNA selection, yielding the 30S pre-initiation complex (PIC). Upon addition of the 50S ribosomal subunit IF-1, IF-2 and IF-3 are released leaving the mature 70S translation initiation complex. This is Translation initiation factor IF-1 from Acholeplasma laidlawii (strain PG-8A).